The chain runs to 216 residues: ATP-dependent Clp protease proteolytic subunit (216 aa).

Serine 101 serves as the catalytic Nucleophile. Residue histidine 126 is part of the active site.

The protein belongs to the peptidase S14 family. Component of the chloroplastic Clp protease core complex.

It localises to the plastid. The protein resides in the chloroplast stroma. It catalyses the reaction Hydrolysis of proteins to small peptides in the presence of ATP and magnesium. alpha-casein is the usual test substrate. In the absence of ATP, only oligopeptides shorter than five residues are hydrolyzed (such as succinyl-Leu-Tyr-|-NHMec, and Leu-Tyr-Leu-|-Tyr-Trp, in which cleavage of the -Tyr-|-Leu- and -Tyr-|-Trp bonds also occurs).. Functionally, cleaves peptides in various proteins in a process that requires ATP hydrolysis. Has a chymotrypsin-like activity. Plays a major role in the degradation of misfolded proteins. This Oryza nivara (Indian wild rice) protein is ATP-dependent Clp protease proteolytic subunit.